The primary structure comprises 1576 residues: DNA-directed RNA polymerase subunit beta' (1576 aa).

Zn(2+) is bound by residues Cys-64, Cys-66, Cys-79, and Cys-82. Mg(2+) contacts are provided by Asp-590, Asp-592, and Asp-594. 4 residues coordinate Zn(2+): Cys-928, Cys-1002, Cys-1009, and Cys-1012.

Belongs to the RNA polymerase beta' chain family. The RNAP catalytic core consists of 2 alpha, 1 beta, 1 beta' and 1 omega subunit. When a sigma factor is associated with the core the holoenzyme is formed, which can initiate transcription. It depends on Mg(2+) as a cofactor. Zn(2+) is required as a cofactor.

The catalysed reaction is RNA(n) + a ribonucleoside 5'-triphosphate = RNA(n+1) + diphosphate. Its function is as follows. DNA-dependent RNA polymerase catalyzes the transcription of DNA into RNA using the four ribonucleoside triphosphates as substrates. This chain is DNA-directed RNA polymerase subunit beta', found in Aquifex pyrophilus.